Reading from the N-terminus, the 121-residue chain is MTGTESRAEIGALGEQLAVDYLQGLGLRVLARNWRCRYGELDVIAADGRAVVFIEVKTRTTDRFGGVAQAVTPTKVRRLRRLAGVWLAQQPGHWAAVRIDVVTVRIGRRRVPEVTHIKGVA.

The protein belongs to the UPF0102 family.

The polypeptide is UPF0102 protein Mvan_2202 (Mycolicibacterium vanbaalenii (strain DSM 7251 / JCM 13017 / BCRC 16820 / KCTC 9966 / NRRL B-24157 / PYR-1) (Mycobacterium vanbaalenii)).